We begin with the raw amino-acid sequence, 280 residues long: Biotin carboxyl carrier protein of acetyl-CoA carboxylase 1, chloroplastic (280 aa).

The transit peptide at 1–82 directs the protein to the chloroplast; it reads MASSSFSVTS…SNAAKVDGPS (82 aa). The span at 52-75 shows a compositional bias: polar residues; sequence PSRSSYPVVKAQSNKVSTGASSNA. Disordered regions lie at residues 52–106 and 164–215; these read PSRS…ATEE and QPSY…GTFY. The segment covering 177 to 188 has biased composition (low complexity); it reads PAAAAPAPSTPA. A compositionally biased stretch (pro residues) spans 189–198; it reads SLPPPSPPTP. The Biotinyl-binding domain maps to 203 to 279; sequence LPTVKSPMAG…SLDTPLFVVQ (77 aa). K245 is subject to N6-biotinyllysine.

Acetyl-CoA carboxylase is a heterohexamer composed of biotin carboxyl carrier protein, biotin carboxylase and 2 subunits each of ACCase subunit alpha and ACCase plastid-coded subunit beta (accD). In terms of tissue distribution, present in developing tissues from roots, leaves, flowers, siliques and seeds (at protein level).

It localises to the plastid. It is found in the chloroplast. It functions in the pathway lipid metabolism; fatty acid biosynthesis. Its function is as follows. This protein is a component of the acetyl coenzyme A carboxylase complex; first, biotin carboxylase catalyzes the carboxylation of the carrier protein and then the transcarboxylase transfers the carboxyl group to form malonyl-CoA. The sequence is that of Biotin carboxyl carrier protein of acetyl-CoA carboxylase 1, chloroplastic (BCCP1) from Arabidopsis thaliana (Mouse-ear cress).